The primary structure comprises 706 residues: Choline transporter-like protein 2 (706 aa).

Topologically, residues M1–D33 are cytoplasmic. Phosphothreonine is present on T14. A helical membrane pass occupies residues V34–A54. Over W55 to W232 the chain is Extracellular. 2 N-linked (GlcNAc...) asparagine glycosylation sites follow: N187 and N200. Residues Y233–L253 traverse the membrane as a helical segment. At R254–L256 the chain is on the cytoplasmic side. A helical membrane pass occupies residues A257–F277. At H278–W315 the chain is on the extracellular side. A helical membrane pass occupies residues M316–L336. At R337 to P364 the chain is on the cytoplasmic side. A helical transmembrane segment spans residues L365–L385. Residues S386–R440 lie on the Extracellular side of the membrane. A helical transmembrane segment spans residues A441–L461. Residues A462–S504 are Cytoplasmic-facing. Residues L505–L525 traverse the membrane as a helical segment. Residues D526–Y563 lie on the Extracellular side of the membrane. Residues I564 to L584 form a helical membrane-spanning segment. The Cytoplasmic portion of the chain corresponds to M585 to D599. Residues F600–F620 traverse the membrane as a helical segment. The Extracellular portion of the chain corresponds to F621 to Y638. The helical transmembrane segment at W639–V659 threads the bilayer. Residues Y660–S706 lie on the Cytoplasmic side of the membrane.

This sequence belongs to the CTL (choline transporter-like) family. As to quaternary structure, interacts with COCH. In terms of processing, N-glycosylated.

The protein localises to the cell membrane. The protein resides in the mitochondrion outer membrane. It catalyses the reaction choline(out) + n H(+)(in) = choline(in) + n H(+)(out). The catalysed reaction is ethanolamine(out) + n H(+)(in) = ethanolamine(in) + n H(+)(out). In terms of biological role, choline/H+ antiporter, mainly in mitochodria. Also acts as a low-affinity ethanolamine/H+ antiporter, regulating the supply of extracellular ethanolamine (Etn) for the CDP-Etn pathway, redistribute intracellular Etn and balance the CDP-Cho and CDP-Etn arms of the Kennedy pathway. The sequence is that of Choline transporter-like protein 2 (SLC44A2) from Sus scrofa (Pig).